The primary structure comprises 167 residues: Swarming motility protein SwrB (167 aa).

A disordered region spans residues 63 to 105; the sequence is IENKASSASQSDEESQKSGLQTSETYQERDPVQEAENLPEHIE. Over residues 88–105 the composition is skewed to basic and acidic residues; sequence YQERDPVQEAENLPEHIE.

Required for swarming motility and for maximal sigma-D activity. The sequence is that of Swarming motility protein SwrB (swrB) from Bacillus subtilis (strain 168).